The chain runs to 196 residues: Glycerol-3-phosphate acyltransferase (196 aa).

Helical transmembrane passes span 4 to 24 (LTLLMILSAYLLGSISSAVVI), 80 to 100 (PFFLGLIAVAACLGHIFPLYF), 114 to 134 (AMFPVAWEMALLLIATWLLVF), and 155 to 175 (AYWIKPQYTVPVIMISLLILW).

It belongs to the PlsY family. Probably interacts with PlsX.

Its subcellular location is the cell inner membrane. The catalysed reaction is an acyl phosphate + sn-glycerol 3-phosphate = a 1-acyl-sn-glycero-3-phosphate + phosphate. The protein operates within lipid metabolism; phospholipid metabolism. Its function is as follows. Catalyzes the transfer of an acyl group from acyl-phosphate (acyl-PO(4)) to glycerol-3-phosphate (G3P) to form lysophosphatidic acid (LPA). This enzyme utilizes acyl-phosphate as fatty acyl donor, but not acyl-CoA or acyl-ACP. This Idiomarina loihiensis (strain ATCC BAA-735 / DSM 15497 / L2-TR) protein is Glycerol-3-phosphate acyltransferase.